Consider the following 601-residue polypeptide: Sestrin homolog (601 aa).

Over residues 1–11 (MISMGMTSKGQ) the composition is skewed to polar residues. The segment at 1 to 58 (MISMGMTSKGQNVDGAPAGNSSSEWIISSSSSPFQANKRYSLDPPFGSDYSPPASPQN) is disordered. A glycan (N-linked (GlcNAc...) asparagine) is linked at asparagine 20. The span at 21-32 (SSSEWIISSSSS) shows a compositional bias: low complexity. Asparagine 322 and asparagine 330 each carry an N-linked (GlcNAc...) asparagine glycan. The disordered stretch occupies residues 355–425 (RRSQQQDDDD…DSSSSTLSQS (71 aa)). Over residues 368–379 (LHDRQQDFHNAG) the composition is skewed to basic and acidic residues. Residues 380-425 (DDSQSSNNNTTTTTTTTTTTTTTTNTNTTSNSAGGGDSSSSTLSQS) are compositionally biased toward low complexity. Asparagine 387, asparagine 388, asparagine 406, asparagine 438, and asparagine 499 each carry an N-linked (GlcNAc...) asparagine glycan.

This sequence belongs to the sestrin family.

The protein resides in the nucleus. The protein localises to the cytoplasm. Functionally, may function as a negative feedback regulator of TOR function. In Dictyostelium discoideum (Social amoeba), this protein is Sestrin homolog.